Reading from the N-terminus, the 198-residue chain is Glycerol-3-phosphate acyltransferase (198 aa).

A run of 5 helical transmembrane segments spans residues 6 to 26, 56 to 78, 83 to 101, 113 to 133, and 154 to 174; these read MLPVALLIGYLLGSIPFGLIL, LAAATLLGDALKGTAAVIIAGYL, AAMLAGLGAFLGHLFPVWL, IGILIGLLWPYAIFFCLVWLA, and IVLWAFGHTALAALFALLTLL.

Belongs to the PlsY family. As to quaternary structure, probably interacts with PlsX.

Its subcellular location is the cell inner membrane. The enzyme catalyses an acyl phosphate + sn-glycerol 3-phosphate = a 1-acyl-sn-glycero-3-phosphate + phosphate. It participates in lipid metabolism; phospholipid metabolism. Its function is as follows. Catalyzes the transfer of an acyl group from acyl-phosphate (acyl-PO(4)) to glycerol-3-phosphate (G3P) to form lysophosphatidic acid (LPA). This enzyme utilizes acyl-phosphate as fatty acyl donor, but not acyl-CoA or acyl-ACP. This chain is Glycerol-3-phosphate acyltransferase, found in Bradyrhizobium sp. (strain ORS 278).